Reading from the N-terminus, the 176-residue chain is ATP synthase subunit delta (176 aa).

Belongs to the ATPase delta chain family. F-type ATPases have 2 components, F(1) - the catalytic core - and F(0) - the membrane proton channel. F(1) has five subunits: alpha(3), beta(3), gamma(1), delta(1), epsilon(1). F(0) has three main subunits: a(1), b(2) and c(10-14). The alpha and beta chains form an alternating ring which encloses part of the gamma chain. F(1) is attached to F(0) by a central stalk formed by the gamma and epsilon chains, while a peripheral stalk is formed by the delta and b chains.

The protein localises to the cell inner membrane. In terms of biological role, f(1)F(0) ATP synthase produces ATP from ADP in the presence of a proton or sodium gradient. F-type ATPases consist of two structural domains, F(1) containing the extramembraneous catalytic core and F(0) containing the membrane proton channel, linked together by a central stalk and a peripheral stalk. During catalysis, ATP synthesis in the catalytic domain of F(1) is coupled via a rotary mechanism of the central stalk subunits to proton translocation. Functionally, this protein is part of the stalk that links CF(0) to CF(1). It either transmits conformational changes from CF(0) to CF(1) or is implicated in proton conduction. In Campylobacter curvus (strain 525.92), this protein is ATP synthase subunit delta.